Here is a 393-residue protein sequence, read N- to C-terminus: Protein Njmu-R1 (393 aa).

The disordered stretch occupies residues 1–74 (MLPSLQESLD…AETPSGDDFS (74 aa)). 2 positions are modified to phosphoserine: serine 8 and serine 18. A compositionally biased stretch (acidic residues) spans 9–24 (LDGDEKELESSEEGGS).

In terms of assembly, interacts with TBC1D23; this interaction may be indirect.

In terms of biological role, may have a role in spermatogenesis. This is Protein Njmu-R1 from Mus musculus (Mouse).